Reading from the N-terminus, the 923-residue chain is Protocadherin gamma-B4 (923 aa).

The first 30 residues, 1–30 (MGSGAGELGRAERLPVLFLFLLSLFCPALC), serve as a signal peptide directing secretion. 6 Cadherin domains span residues 31–133 (EQIR…TPKF), 134–242 (TQNS…APVF), 243–345 (SQDI…APEV), 346–450 (IFQS…APVF), 451–560 (SQSS…APRV), and 568–673 (DGSA…LPDI). The Extracellular portion of the chain corresponds to 31–689 (EQIRYRIPEE…SDLEAELQFY (659 aa)). 2 N-linked (GlcNAc...) asparagine glycosylation sites follow: asparagine 417 and asparagine 543. The helical transmembrane segment at 690 to 710 (LVVALALISVLFLVAMILAIA) threads the bilayer. Topologically, residues 711–923 (LRLRRSSSPA…KKKSGKKEKK (213 aa)) are cytoplasmic. 2 disordered regions span residues 797 to 832 (SHQQ…WPNN) and 893 to 923 (ATLT…KEKK). Residues 913-923 (NKKKSGKKEKK) show a composition bias toward basic residues.

It is found in the cell membrane. Its function is as follows. Potential calcium-dependent cell-adhesion protein. May be involved in the establishment and maintenance of specific neuronal connections in the brain. This chain is Protocadherin gamma-B4 (PCDHGB4), found in Pan troglodytes (Chimpanzee).